The chain runs to 325 residues: MSSYSRITGTGSYLPPRRVTNDDLAKELATRGIETSDQWIVERTGIHARHFAAPEVTSSDLALEAARHALEAAGRKAEDIDLIIVATSTPDMVFPSSAAILQNKLGVAGCPAFDVQAVCSGFVYALTVADAMIRTGTARCALVVGAEVFSRILDFNDRTTCVLFGDGAGAVVLEASEEPGILASDLHADGKHVGILCVPGHVSGGNVLGTPLLHMDGQAVFKLAVRVLEDAARATLAKAGKTEADIDWLIPHQANIRIMEGTAKKLKLPREKLIVTVNEHGNTSAASIPLALDEAVRSGKVKKGETVMLEGVGGGFTWGAVLLNL.

Active-site residues include cysteine 119 and histidine 252. The tract at residues glutamine 253–arginine 257 is ACP-binding. Asparagine 282 is a catalytic residue.

Belongs to the thiolase-like superfamily. FabH family. In terms of assembly, homodimer.

The protein resides in the cytoplasm. The enzyme catalyses malonyl-[ACP] + acetyl-CoA + H(+) = 3-oxobutanoyl-[ACP] + CO2 + CoA. Its pathway is lipid metabolism; fatty acid biosynthesis. Its function is as follows. Catalyzes the condensation reaction of fatty acid synthesis by the addition to an acyl acceptor of two carbons from malonyl-ACP. Catalyzes the first condensation reaction which initiates fatty acid synthesis and may therefore play a role in governing the total rate of fatty acid production. Possesses both acetoacetyl-ACP synthase and acetyl transacylase activities. Its substrate specificity determines the biosynthesis of branched-chain and/or straight-chain of fatty acids. The polypeptide is Beta-ketoacyl-[acyl-carrier-protein] synthase III (Variovorax paradoxus (strain S110)).